The sequence spans 180 residues: Transcriptional repressor NrdR (180 aa).

Residues 3–34 (CPRCSKQEIRVLESRSAEGGQSVRRRRECMSC) fold into a zinc finger. In terms of domain architecture, ATP-cone spans 49-139 (IMVIKRDGSR…VYRQFQGIKD (91 aa)). Positions 155–180 (LERLLQDSSASDSESSGSPDLVGEYS) are disordered. Residues 160–174 (QDSSASDSESSGSPD) show a composition bias toward low complexity.

Belongs to the NrdR family. Zn(2+) serves as cofactor.

Negatively regulates transcription of bacterial ribonucleotide reductase nrd genes and operons by binding to NrdR-boxes. The protein is Transcriptional repressor NrdR of Synechococcus sp. (strain JA-2-3B'a(2-13)) (Cyanobacteria bacterium Yellowstone B-Prime).